A 108-amino-acid polypeptide reads, in one-letter code: MRHYEIVFLVHPDQSEQVSAMVERYRAQIEAAQGKVHRLEDWGRRVLAYPIQKLVKAHYILMNIECDRQTLAELESNFRFNDAILRHMIIRRDEAVTEASMMMQEVKK.

It belongs to the bacterial ribosomal protein bS6 family.

Its function is as follows. Binds together with bS18 to 16S ribosomal RNA. The polypeptide is Small ribosomal subunit protein bS6 (Dichelobacter nodosus (strain VCS1703A)).